The sequence spans 318 residues: Cyclic AMP receptor-like protein F (318 aa).

The Extracellular portion of the chain corresponds to 1 to 3; the sequence is MKD. A helical transmembrane segment spans residues 4 to 24; that stretch reads IILIYMICAPISMIGSLFIII. Residues 25–38 lie on the Cytoplasmic side of the membrane; sequence TWLLYAKLKNSGSN. A helical membrane pass occupies residues 39–59; that stretch reads FIFFQAISDFFFTSKYIITII. The Extracellular segment spans residues 60 to 83; sequence FYYINIPQFSDETSSTDTNPYCFS. A disulfide bond links C81 and C177. The chain crosses the membrane as a helical span at residues 84–104; that stretch reads LGLFSQFFGQATIMWSYTMTV. Residues 105–145 are Cytoplasmic-facing; sequence KVFHSYFEMKKKNNNNNIGSNNIGGGGGGNNSNKQNSIDKT. Residues 146–166 form a helical membrane-spanning segment; it reads LKWYHLFVWGFCLVNATIIGI. The Extracellular portion of the chain corresponds to 167 to 187; it reads SKQYGPSSTGCWIVGANNPYR. A helical membrane pass occupies residues 188–208; sequence FFELVPLYFTITTSIIILILI. Topologically, residues 209-234 are cytoplasmic; sequence LVKMKKSKPSSLLPTESMRYNQQARE. A helical transmembrane segment spans residues 235-255; sequence FKIQLMKFVLIFIIFWLPATV. Topologically, residues 256–267 are extracellular; the sequence is LRTLEYFGIEKT. The chain crosses the membrane as a helical span at residues 268–288; the sequence is FFILLDAVSVSLQALANSLVW. At 289-318 the chain is on the cytoplasmic side; that stretch reads ATSPQFLKLMKRKVVNKPNKQMEREYLINK.

The protein belongs to the G-protein coupled receptor 5 family.

The protein resides in the membrane. Functionally, receptor for cAMP. The protein is Cyclic AMP receptor-like protein F (crlF) of Dictyostelium discoideum (Social amoeba).